Reading from the N-terminus, the 317-residue chain is tRNA pseudouridine synthase B (317 aa).

Residue Asp47 is the Nucleophile of the active site.

It belongs to the pseudouridine synthase TruB family. Type 1 subfamily.

The catalysed reaction is uridine(55) in tRNA = pseudouridine(55) in tRNA. Responsible for synthesis of pseudouridine from uracil-55 in the psi GC loop of transfer RNAs. The chain is tRNA pseudouridine synthase B from Shewanella frigidimarina (strain NCIMB 400).